The primary structure comprises 90 residues: Large ribosomal subunit protein eL34 (90 aa).

Residues alanine 38–proline 65 form a disordered region. The span at arginine 51 to alanine 62 shows a compositional bias: basic residues.

This sequence belongs to the eukaryotic ribosomal protein eL34 family.

This chain is Large ribosomal subunit protein eL34 (rpl34e), found in Aeropyrum pernix (strain ATCC 700893 / DSM 11879 / JCM 9820 / NBRC 100138 / K1).